A 669-amino-acid chain; its full sequence is RNA-binding protein 14 (669 aa).

2 consecutive RRM domains span residues 1–73 (MKIF…MSRP) and 79–149 (WKIF…LSTK). Residues Lys126, Lys135, Lys138, Lys149, and Lys153 each participate in a glycyl lysine isopeptide (Lys-Gly) (interchain with G-Cter in SUMO2) cross-link. Disordered stretches follow at residues 148-175 (TKGQKKGPGLAIQSGDKTKKPGAGDTAF) and 193-232 (NSTGGFDGQARQPTPPFFGRDRSPLRRSPPRASYVAPLTA). Ser161 carries the phosphoserine modification. Lys164 is subject to N6-acetyllysine; alternate. Lys164 participates in a covalent cross-link: Glycyl lysine isopeptide (Lys-Gly) (interchain with G-Cter in SUMO2); alternate. Residue Thr206 is modified to Phosphothreonine. A phosphoserine mark is found at Ser220, Ser242, Ser244, Ser256, Ser272, and Ser280. Residues 284-303 (PYRGQLASPSSQSAAASSLG) are disordered. A compositionally biased stretch (low complexity) spans 287–303 (GQLASPSSQSAAASSLG). Residues 307 to 354 (GAQPSASALSSYGGQPAAASSLNSYGAQGSSLASYGNQPSSYGAQAAS) form a TRBP-interacting domain; interaction with STIL region. Phosphoserine is present on residues Ser520, Ser523, Ser527, and Ser562. Residues 569–590 (ANSTPPPYERTRLSPPRASYDD) are disordered. Position 572 is a phosphothreonine (Thr572). Ser582 carries the post-translational modification Phosphoserine. Lys600 is covalently cross-linked (Glycyl lysine isopeptide (Lys-Gly) (interchain with G-Cter in SUMO2)). 6 positions are modified to phosphoserine: Ser618, Ser620, Ser623, Ser627, Ser643, and Ser649.

Interacts with NCOA6, CITED1 and XRCC5/KU86. Interacts with SS18. Interacts with STIL and interferes with its interaction with CPAP. Interacts with gamma-tubulin. Part of the HDP-RNP complex composed of at least HEXIM1, PRKDC, XRCC5, XRCC6, paraspeckle proteins (SFPQ, NONO, PSPC1, RBM14, and MATR3) and NEAT1 RNA.

It is found in the nucleus. Its subcellular location is the nucleolus. The protein localises to the cytoplasm. Its function is as follows. May function as a nuclear receptor coactivator, enhancing transcription through other coactivators such as NCOA6 and CITED1. Regulates centriole biogenesis by suppressing the formation of aberrant centriolar protein complexes in the cytoplasm and thus preserving mitotic spindle integrity. Prevents the formation of the STIL-CPAP complex (which can induce the formation of aberrant centriolar protein complexes) by interfering with the interaction of STIL with CPAP. Plays a role in the regulation of DNA virus-mediated innate immune response by assembling into the HDP-RNP complex, a complex that serves as a platform for IRF3 phosphorylation and subsequent innate immune response activation through the cGAS-STING pathway. The chain is RNA-binding protein 14 (RBM14) from Bos taurus (Bovine).